We begin with the raw amino-acid sequence, 366 residues long: Galactoside alpha-(1,2)-fucosyltransferase 1 (366 aa).

Residues 1 to 8 (MWPLSHRH) are Cytoplasmic-facing. Residues 9–25 (LCLAFLLVCVLSAISFF) form a helical; Signal-anchor for type II membrane protein membrane-spanning segment. Residues 26 to 366 (LHIHQDSIRH…LSPLWTLAEP (341 aa)) lie on the Lumenal side of the membrane. N-linked (GlcNAc...) asparagine glycosylation is found at Asn66, Asn302, and Asn328.

This sequence belongs to the glycosyltransferase 11 family.

It localises to the golgi apparatus. The protein localises to the golgi stack membrane. It carries out the reaction a beta-D-galactosyl-(1-&gt;4)-N-acetyl-beta-D-glucosaminyl derivative + GDP-beta-L-fucose = an alpha-L-Fuc-(1-&gt;2)-beta-D-Gal-(1-&gt;4)-beta-D-GlcNAc derivative + GDP + H(+). It catalyses the reaction a ganglioside GA1 + GDP-beta-L-fucose = a ganglioside Fuc-GA1 + GDP + H(+). The enzyme catalyses a beta-D-Gal-(1-&gt;3)-beta-D-GlcNAc-(1-&gt;3)-beta-D-Gal-(1-&gt;4)-beta-D-Glc-(1&lt;-&gt;1')-Cer(d18:1(4E)) + GDP-beta-L-fucose = alpha-L-fucosyl-(1-&gt;2)- beta-D-galactosyl-(1-&gt;3)-N-acetyl-beta-D-glucosaminyl-(1-&gt;3)-beta-D-galactosyl-(1-&gt;4)-beta-D-glucosyl-(1&lt;-&gt;1')-N-acylsphing-4-enine + GDP + H(+). The catalysed reaction is a neolactoside nLc4Cer(d18:1(4E)) + GDP-beta-L-fucose = a neolactoside IV(2)-alpha-Fuc-nLc4Cer(d18:1(4E)) + GDP + H(+). It carries out the reaction a ganglioside GM1 + GDP-beta-L-fucose = a ganglioside Fuc-GM1 + GDP + H(+). It catalyses the reaction beta-D-galactosyl-(1-&gt;3)-N-acetyl-D-galactosamine + GDP-beta-L-fucose = alpha-L-fucosyl-(1-&gt;2)-beta-D-galactosyl-(1-&gt;3)-N-acetyl-D-galactosamine + GDP + H(+). It functions in the pathway protein modification; protein glycosylation. Its function is as follows. Catalyzes the transfer of L-fucose, from a guanosine diphosphate-beta-L-fucose, to the terminal galactose residue of glycoconjugates through an alpha(1,2) linkage leading to H antigen synthesis that is an intermediate substrate in the synthesis of ABO blood group antigens. H antigen is essential for maturation of the glomerular layer of the main olfactory bulb, in cell migration and early cell-cell contacts during tumor associated angiogenesis. Preferentially fucosylates soluble lactose and to a lesser extent fucosylates glycolipids gangliosides GA1 and GM1a. The polypeptide is Galactoside alpha-(1,2)-fucosyltransferase 1 (Aotus azarae (Azara's night monkey)).